A 378-amino-acid chain; its full sequence is Acetylornithine deacetylase (378 aa).

Position 76 (histidine 76) interacts with Zn(2+). The active site involves aspartate 78. Aspartate 108 contacts Zn(2+). Residue glutamate 140 is part of the active site. Glutamate 141, glutamate 165, and histidine 351 together coordinate Zn(2+).

The protein belongs to the peptidase M20A family. ArgE subfamily. Homodimer. Requires Zn(2+) as cofactor. Co(2+) is required as a cofactor. It depends on glutathione as a cofactor.

The protein resides in the cytoplasm. It catalyses the reaction N(2)-acetyl-L-ornithine + H2O = L-ornithine + acetate. It participates in amino-acid biosynthesis; L-arginine biosynthesis; L-ornithine from N(2)-acetyl-L-ornithine (linear): step 1/1. Functionally, catalyzes the hydrolysis of the amide bond of N(2)-acetylated L-amino acids. Cleaves the acetyl group from N-acetyl-L-ornithine to form L-ornithine, an intermediate in L-arginine biosynthesis pathway, and a branchpoint in the synthesis of polyamines. The protein is Acetylornithine deacetylase of Vibrio atlanticus (strain LGP32) (Vibrio splendidus (strain Mel32)).